The sequence spans 180 residues: Adenine phosphoribosyltransferase (180 aa).

Ser-2 bears the N-acetylserine mark. Ser-15 and Ser-30 each carry phosphoserine. Phosphotyrosine is present on Tyr-60. Ser-66 carries the post-translational modification Phosphoserine. Residue Lys-114 is modified to N6-acetyllysine. Phosphothreonine is present on Thr-135.

It belongs to the purine/pyrimidine phosphoribosyltransferase family. In terms of assembly, homodimer.

The protein resides in the cytoplasm. It carries out the reaction AMP + diphosphate = 5-phospho-alpha-D-ribose 1-diphosphate + adenine. Its pathway is purine metabolism; AMP biosynthesis via salvage pathway; AMP from adenine: step 1/1. Functionally, catalyzes a salvage reaction resulting in the formation of AMP, that is energically less costly than de novo synthesis. This Mastomys natalensis (African soft-furred rat) protein is Adenine phosphoribosyltransferase.